The chain runs to 504 residues: Maturase K (504 aa).

This sequence belongs to the intron maturase 2 family. MatK subfamily.

Its subcellular location is the plastid. It is found in the chloroplast. Functionally, usually encoded in the trnK tRNA gene intron. Probably assists in splicing its own and other chloroplast group II introns. This chain is Maturase K, found in Rorippa amphibia (Great yellow-cress).